Reading from the N-terminus, the 72-residue chain is Antimicrobial peptide MeuNaTxbeta-4 (72 aa).

The N-terminal stretch at 1–5 is a signal peptide; it reads LIGVK. The LCN-type CS-alpha/beta domain maps to 7 to 69; it reads EHGYLLDKYT…LWHYETNKCN (63 aa). 4 disulfides stabilise this stretch: C18-C68, C22-C43, C29-C50, and C33-C52.

Expressed by the venom gland.

The protein localises to the secreted. Its function is as follows. Antimicrobial peptide with weak activity against both Gram-positive and -negative bacteria. Its antibiotic activity is potentiated by other antibacterial peptides such as Meucin-49. This is Antimicrobial peptide MeuNaTxbeta-4 from Mesobuthus eupeus (Lesser Asian scorpion).